Here is a 769-residue protein sequence, read N- to C-terminus: MVTTSSGGGIGYPANNGVTQVSLIHSSDSVRTVSTAPIYRPTSSMASTMAHKSSTAPFISANQRMSKPPVRVVAQPPPPHPQALSQQYHQQNPMMMYSAPNTRPHVIPTMQVQPTMAAQIKRNNPVNAQFQNPSEMIADYGVKPQSVEMVQRVRAVRRQVADEETELRRLRELEHETAQLQNKNYGRERELNVQGSMLKEAQLELRNASMRAQSLNKHLEEMYRRRQTAAAAALVEQRKMQQHQILLARAANQVSTQEVIRPRASVEPFQVNNTQQQQPSPQMMKSEEFSEKRDLNGQTGSYDAIDGSGDHQKIPTEPSYLAPCKENQQKYSELSKMASTDPHSNHSSPSTSSQKAPTLITFSPPSFEQKINSSTMTRDSPFVERPTSFGDSLDESRLRSGKTDLVSLRSDSLKATKRRSWAASEGTSMSEAEMIHRLLDEQRRGRSHFIPQLPTSQEEPSAITSETYAEEVVNSESKQVATSSDSTNNLELPTEQMVLGSDTTTEEDASSCSTRSDDGQNLEMEVAIERRTVKGILRRPNEKMNKGRIEFDPLALLLDAALEGELDLVRSSASKLTDVSQANDEGITALHNAICAGHYEIVRFLIENDADVNAQDSDGWTPLHCAASCNNLPMVRQLVEGGGCVLASTLSDMETPVEKCEEDEDGYDGCLKYLSAAHNSTGSINTGKVYAAYGYEAAFEDELSFDAGDELTVIEKDKVDKNWWTCEKNNGEKGQVPRTYLALYPSLKYRKKLNFVMFDLPLESNNNVE.

3 disordered regions span residues 69 to 88 (PVRVVAQPPPPHPQALSQQY), 265 to 396 (SVEP…LDES), and 451 to 518 (PQLP…RSDD). Low complexity predominate over residues 275–284 (QQQQPSPQMM). Basic and acidic residues predominate over residues 285-295 (KSEEFSEKRDL). Positions 339–353 (STDPHSNHSSPSTSS) are enriched in low complexity. 3 stretches are compositionally biased toward polar residues: residues 354 to 378 (QKAPTLITFSPPSFEQKINSSTMTR), 453 to 467 (LPTSQEEPSAITSET), and 474 to 491 (NSESKQVATSSDSTNNLE). 2 ANK repeats span residues 585-617 (EGITALHNAICAGHYEIVRFLIENDADVNAQDS) and 618-652 (DGWTPLHCAASCNNLPMVRQLVEGGGCVLASTLSD). One can recognise an SH3 domain in the interval 684–746 (INTGKVYAAY…PRTYLALYPS (63 aa)).

This sequence belongs to the iASPP family. In terms of assembly, interacts with cep-1/p53; the interaction inhibits pro-apoptotic activity of cep-1.

It is found in the nucleus. Negetively regulates apoptosis via its interaction with cep-1. This is Apoptotic enhancer 1 protein from Caenorhabditis elegans.